A 153-amino-acid chain; its full sequence is MGKKSSTGTGKTNLKILACLLLIFLMATIFLLILEIISGQRYSNDDSEGVTAALKHVSTPTTNCTETTTPDSVTSQAMENKESMKKNEGEPPVWIQALTTTLSIILLVCIIMACIICSRTTEEEKSEMQSSASSVETLQSLNEAIFPKGEMNV.

A run of 2 helical transmembrane segments spans residues 16–36 and 97–117; these read ILACLLLIFLMATIFLLILEI and ALTTTLSIILLVCIIMACIIC.

It localises to the membrane. This is an uncharacterized protein from Human herpesvirus 6A (strain Uganda-1102) (HHV-6 variant A).